The following is a 285-amino-acid chain: 2,3,4,5-tetrahydropyridine-2,6-dicarboxylate N-succinyltransferase (285 aa).

The substrate site is built by arginine 111 and aspartate 148.

Belongs to the transferase hexapeptide repeat family. In terms of assembly, homotrimer.

It is found in the cytoplasm. The catalysed reaction is (S)-2,3,4,5-tetrahydrodipicolinate + succinyl-CoA + H2O = (S)-2-succinylamino-6-oxoheptanedioate + CoA. It participates in amino-acid biosynthesis; L-lysine biosynthesis via DAP pathway; LL-2,6-diaminopimelate from (S)-tetrahydrodipicolinate (succinylase route): step 1/3. The protein is 2,3,4,5-tetrahydropyridine-2,6-dicarboxylate N-succinyltransferase of Rhizobium meliloti (strain 1021) (Ensifer meliloti).